The chain runs to 1379 residues: DNA-directed RNA polymerase subunit beta (1379 aa).

This sequence belongs to the RNA polymerase beta chain family. The RNAP catalytic core consists of 2 alpha, 1 beta, 1 beta' and 1 omega subunit. When a sigma factor is associated with the core the holoenzyme is formed, which can initiate transcription.

The enzyme catalyses RNA(n) + a ribonucleoside 5'-triphosphate = RNA(n+1) + diphosphate. Functionally, DNA-dependent RNA polymerase catalyzes the transcription of DNA into RNA using the four ribonucleoside triphosphates as substrates. This chain is DNA-directed RNA polymerase subunit beta, found in Rhizobium leguminosarum bv. trifolii (strain WSM2304).